The sequence spans 2572 residues: Zinc finger homeobox protein 2 (2572 aa).

Disordered regions lie at residues M1 to P107 and L343 to Y425. A compositionally biased stretch (low complexity) spans S8–P36. Polar residues-rich tracts occupy residues A44–S53 and L389–E398. 2 consecutive C2H2-type zinc fingers follow at residues L453 to H476 and Y508 to H532. 3 disordered regions span residues Q537 to K566, L608 to D655, and R675 to P710. The segment covering P615 to P628 has biased composition (pro residues). Residues L696–P705 show a composition bias toward low complexity. 2 C2H2-type zinc fingers span residues L821–H845 and Y870–H894. The segment at Q929 to A974 is disordered. Over residues K954–A974 the composition is skewed to polar residues. The segment at Y1009–H1032 adopts a C2H2-type 5 zinc-finger fold. Residues P1061–L1171 form a disordered region. Residues G1120 to E1132 show a composition bias toward pro residues. 2 consecutive C2H2-type zinc fingers follow at residues Y1191 to H1217 and F1248 to H1272. Disordered stretches follow at residues S1269–P1325, L1389–R1408, and M1415–E1434. Positions T1279–P1311 are enriched in basic and acidic residues. A compositionally biased stretch (pro residues) spans A1392 to P1401. The segment at L1480 to H1503 adopts a C2H2-type 8 zinc-finger fold. Positions P1528–V1591 are disordered. The homeobox 1 DNA-binding region spans R1595–A1654. The C2H2-type 9; degenerate zinc-finger motif lies at S1670 to Q1696. Residues Q1696–G1724 are compositionally biased toward acidic residues. 5 disordered regions span residues Q1696–H1769, A1820–L1860, E1912–Q2065, V2268–L2327, and N2398–E2431. The segment covering P1728–P1738 has biased composition (pro residues). A C2H2-type 10 zinc finger spans residues H1769–H1791. The homeobox 2 DNA-binding region spans D1857–Q1916. Low complexity predominate over residues P1925 to S1939. Basic and acidic residues predominate over residues K1949–A1963. A compositionally biased stretch (pro residues) spans T1991–P2004. The segment covering S2017–P2044 has biased composition (low complexity). Gly residues predominate over residues G2045–D2061. Positions Q2065 to K2124 form a DNA-binding region, homeobox 3. The segment covering D2284 to T2293 has biased composition (polar residues). Positions L2305–P2315 are enriched in basic and acidic residues. Over residues Q2402–P2422 the composition is skewed to pro residues. The C2H2-type 11; degenerate zinc-finger motif lies at Y2451–R2471. The C2H2-type 12 zinc finger occupies Y2495 to H2519. The disordered stretch occupies residues E2551–L2572. Over residues T2563 to L2572 the composition is skewed to low complexity.

The protein resides in the nucleus. In terms of biological role, transcriptional regulator that is critical for the regulation of pain perception and processing of noxious stimuli. The protein is Zinc finger homeobox protein 2 (ZFHX2) of Homo sapiens (Human).